The chain runs to 72 residues: Large ribosomal subunit protein uL29 (72 aa).

The protein belongs to the universal ribosomal protein uL29 family.

The polypeptide is Large ribosomal subunit protein uL29 (Rhodopirellula baltica (strain DSM 10527 / NCIMB 13988 / SH1)).